The following is a 112-amino-acid chain: Protein lin-52 homolog (112 aa).

The protein belongs to the lin-52 family. In terms of assembly, component of the DREAM complex.

The polypeptide is Protein lin-52 homolog (lin52) (Danio rerio (Zebrafish)).